A 236-amino-acid polypeptide reads, in one-letter code: MVKMEIRFHGHACFEIIGEKGRILIDPFLKGNPAADVGPEHFTHLDGILVSHGHSDHLGDAIELSQKTGAPLICVFELARLCARYGAKTHAMHIGGKHTFNFGTVRLTQALHGSVFEPPGEEESFTYAGMACGFLIQMDGKWIYHAGDTGLFGDMELIGRRHPLAAAMLPIGDNYTMGQEEAVYAATLLRPNYLIPMHYNTFPVIQQDPQEFSELLKRKFPASKGEILAPGQSLII.

Belongs to the UPF0173 family.

The sequence is that of UPF0173 metal-dependent hydrolase DSY1309 from Desulfitobacterium hafniense (strain Y51).